We begin with the raw amino-acid sequence, 371 residues long: Galanin receptor type 2 (371 aa).

At 1–27 (MNGSDSQGAEDSSQEGGGGWQPEAVLV) the chain is on the extracellular side. A glycan (N-linked (GlcNAc...) asparagine) is linked at Asn2. Residues 28–48 (PLFFALIFLVGAVGNALVLAV) traverse the membrane as a helical segment. The Cytoplasmic portion of the chain corresponds to 49-59 (LLRGGQAVSTT). A helical transmembrane segment spans residues 60–80 (NLFILNLGVADLCFILCCVPF). Over 81–98 (QATIYTLDDWVFGSLLCK) the chain is Extracellular. A disulfide bond links Cys97 and Cys174. The chain crosses the membrane as a helical span at residues 99 to 120 (AVHFLIFLTMHASSFTLAAVSL). Residues 121–140 (DRYLAIRYPLHSRELRTPRN) are Cytoplasmic-facing. A helical transmembrane segment spans residues 141-161 (ALAAIGLIWGLALLFSGPYLS). Residues 162–186 (YYSQSQLANLTVCHPAWSAPRRRAM) lie on the Extracellular side of the membrane. Residues 187–207 (DLCTFVFSYLLPVLVLSLTYA) traverse the membrane as a helical segment. At 208–236 (RTLHYLWRTVDPVAAGSGSQRAKRKVTRM) the chain is on the cytoplasmic side. The helical transmembrane segment at 237–257 (IVIVAVLFCLCWMPHHALILC) threads the bilayer. Over 258–259 (VW) the chain is Extracellular. A helical transmembrane segment spans residues 260-280 (FGRFPLTRATYALRILSHLVS). The Cytoplasmic portion of the chain corresponds to 281–371 (YANSCVNPIV…TLSRTLDPAC (91 aa)).

This sequence belongs to the G-protein coupled receptor 1 family.

It is found in the cell membrane. Receptor for the hormone galanin, GALP and spexin-1. The activity of this receptor is mediated by G proteins that activate the phospholipase C/protein kinase C pathway (via G(q)) and that inhibit adenylyl cyclase (via G(i)). This is Galanin receptor type 2 (Galr2) from Mus musculus (Mouse).